Reading from the N-terminus, the 691-residue chain is DNA ligase (691 aa).

Residues 41-45, 90-91, and glutamate 130 each bind NAD(+); these read DAEYD and SL. Lysine 132 serves as the catalytic N6-AMP-lysine intermediate. NAD(+)-binding residues include arginine 153, glutamate 190, lysine 307, and lysine 331. Zn(2+)-binding residues include cysteine 425, cysteine 428, cysteine 443, and cysteine 449. Positions 610-691 constitute a BRCT domain; the sequence is APQGVLAGKT…MHKLLEGHAR (82 aa).

This sequence belongs to the NAD-dependent DNA ligase family. LigA subfamily. Mg(2+) is required as a cofactor. Requires Mn(2+) as cofactor.

The enzyme catalyses NAD(+) + (deoxyribonucleotide)n-3'-hydroxyl + 5'-phospho-(deoxyribonucleotide)m = (deoxyribonucleotide)n+m + AMP + beta-nicotinamide D-nucleotide.. Its function is as follows. DNA ligase that catalyzes the formation of phosphodiester linkages between 5'-phosphoryl and 3'-hydroxyl groups in double-stranded DNA using NAD as a coenzyme and as the energy source for the reaction. It is essential for DNA replication and repair of damaged DNA. In Burkholderia thailandensis (strain ATCC 700388 / DSM 13276 / CCUG 48851 / CIP 106301 / E264), this protein is DNA ligase.